The sequence spans 414 residues: Probable peptidoglycan glycosyltransferase FtsW (414 aa).

At 1-12 the chain is on the cytoplasmic side; it reads MRLSLPRLKMPR. Residues 13 to 33 traverse the membrane as a helical segment; sequence LPGFSILVWISTALKGWVMGS. Topologically, residues 34–47 are periplasmic; the sequence is REKDTDSLIMYDRT. Residues 48 to 68 traverse the membrane as a helical segment; sequence LLWLTFGLAAIGFIMVTSASM. Topologically, residues 69–86 are cytoplasmic; the sequence is PIGQRLTNDPFFFAKRDG. The chain crosses the membrane as a helical span at residues 87 to 107; sequence VYLILAFILAIITLRLPMEFW. Over 108–111 the chain is Periplasmic; the sequence is QRYS. The helical transmembrane segment at 112 to 132 threads the bilayer; that stretch reads ATMLLGSIILLMIVLVVGSSV. Over 133 to 174 the chain is Cytoplasmic; that stretch reads KGASRWIDLGLLRIQPAELTKLSLFCYIANYLVRKGDEVRNN. Residues 175 to 194 traverse the membrane as a helical segment; that stretch reads LRGFLKPMGVILVLAVLLLA. The Periplasmic portion of the chain corresponds to 195-197; the sequence is QPD. Residues 198–217 form a helical membrane-spanning segment; it reads LGTVVVLFVTTLAMLFLAGA. Residue Lys218 is a topological domain, cytoplasmic. The helical transmembrane segment at 219-239 threads the bilayer; it reads LWQFIAIIGMGISAVVLLILA. The Periplasmic segment spans residues 240-301; sequence EPYRIRRVTA…PEAHTDFIFA (62 aa). The helical transmembrane segment at 302–322 threads the bilayer; it reads IIGEELGYVGVVLALLMVFFV. At 323–342 the chain is on the cytoplasmic side; the sequence is AFRAMSIGRKALEIDHRFSG. The helical transmembrane segment at 343–363 threads the bilayer; it reads FLACSIGIWFSFQALVNVGAA. The Periplasmic portion of the chain corresponds to 364–373; sequence AGMLPTKGLT. Residues 374–394 traverse the membrane as a helical segment; the sequence is LPLISYGGSSLLIMSTAIMML. Residues 395-414 lie on the Cytoplasmic side of the membrane; that stretch reads LRIDYETRLEKAQAFVRGSR.

This sequence belongs to the SEDS family. FtsW subfamily.

Its subcellular location is the cell inner membrane. The catalysed reaction is [GlcNAc-(1-&gt;4)-Mur2Ac(oyl-L-Ala-gamma-D-Glu-L-Lys-D-Ala-D-Ala)](n)-di-trans,octa-cis-undecaprenyl diphosphate + beta-D-GlcNAc-(1-&gt;4)-Mur2Ac(oyl-L-Ala-gamma-D-Glu-L-Lys-D-Ala-D-Ala)-di-trans,octa-cis-undecaprenyl diphosphate = [GlcNAc-(1-&gt;4)-Mur2Ac(oyl-L-Ala-gamma-D-Glu-L-Lys-D-Ala-D-Ala)](n+1)-di-trans,octa-cis-undecaprenyl diphosphate + di-trans,octa-cis-undecaprenyl diphosphate + H(+). It participates in cell wall biogenesis; peptidoglycan biosynthesis. Peptidoglycan polymerase that is essential for cell division. In Escherichia coli O157:H7, this protein is Probable peptidoglycan glycosyltransferase FtsW.